Reading from the N-terminus, the 219-residue chain is Vacuolar iron transporter homolog 2.1 (219 aa).

Positions 1–15 are enriched in polar residues; the sequence is MTSNVQLSETNSPRN. The segment at 1 to 26 is disordered; it reads MTSNVQLSETNSPRNQKTRPRAEKEE. Residue threonine 2 is modified to N-acetylthreonine. Topologically, residues 2-37 are cytoplasmic; that stretch reads TSNVQLSETNSPRNQKTRPRAEKEEVDYMQRAQWLR. Residues 38–58 form a helical membrane-spanning segment; sequence AALLGANDGLVTVASLMMGVG. Residues 59–67 lie on the Vacuolar side of the membrane; the sequence is SIKEDVKAM. The helical transmembrane segment at 68–88 threads the bilayer; it reads LLVGFAGLVAGACSMAIGEFV. At 89–133 the chain is on the cytoplasmic side; the sequence is SVCTQRDIETAQMKRAIEHKTSLSAIDEQEEEEKKERLPNPGQAA. The chain crosses the membrane as a helical span at residues 134–154; that stretch reads IASALAFSVGAAMPLLGAVFI. At 155–161 the chain is on the vacuolar side; the sequence is ENHKVRM. Residues 162–182 traverse the membrane as a helical segment; sequence VVVAVVATIALVVFGVTGAVL. The Cytoplasmic segment spans residues 183–193; sequence GKTSVVKSSVR. A helical transmembrane segment spans residues 194–214; sequence VVIGGWMAMALTFGLTKFIGS. Topologically, residues 215–219 are vacuolar; the sequence is AAMQI.

This sequence belongs to the CCC1 family. As to expression, highly expressed in roots. inflorescences and at lower levels in leaves.

The protein resides in the vacuole membrane. It carries out the reaction Fe(2+)(in) = Fe(2+)(out). Its function is as follows. Vacuolar iron transporter involved in the transfer of iron ions from the cytosol to the vacuole for intracellular iron storage. Involved in regulation of cellular iron homeostasis. Vacuolar iron storage is required for seed embryo and seedling development. This chain is Vacuolar iron transporter homolog 2.1, found in Arabidopsis thaliana (Mouse-ear cress).